Here is a 243-residue protein sequence, read N- to C-terminus: Proteasome subunit beta (243 aa).

The segment at 1–40 (MRTPMNNDISGRPDSLNGDRSDVFSPELGEFPNADDRAND) is disordered. A propeptide spans 1 to 49 (MRTPMNNDISGRPDSLNGDRSDVFSPELGEFPNADDRANDIGDMETKTG) (removed in mature form; by autocatalysis). The active-site Nucleophile is threonine 50.

Belongs to the peptidase T1B family. In terms of assembly, the 20S proteasome core is composed of 14 alpha and 14 beta subunits that assemble into four stacked heptameric rings, resulting in a barrel-shaped structure. The two inner rings, each composed of seven catalytic beta subunits, are sandwiched by two outer rings, each composed of seven alpha subunits. The catalytic chamber with the active sites is on the inside of the barrel. Has a gated structure, the ends of the cylinder being occluded by the N-termini of the alpha-subunits. Is capped at one or both ends by the proteasome regulatory ATPase, PAN.

It localises to the cytoplasm. The enzyme catalyses Cleavage of peptide bonds with very broad specificity.. The formation of the proteasomal ATPase PAN-20S proteasome complex, via the docking of the C-termini of PAN into the intersubunit pockets in the alpha-rings, triggers opening of the gate for substrate entry. Interconversion between the open-gate and close-gate conformations leads to a dynamic regulation of the 20S proteasome proteolysis activity. In terms of biological role, component of the proteasome core, a large protease complex with broad specificity involved in protein degradation. This Haloquadratum walsbyi (strain DSM 16790 / HBSQ001) protein is Proteasome subunit beta.